Consider the following 248-residue polypeptide: Uracil-DNA glycosylase (248 aa).

Asp-85 (proton acceptor) is an active-site residue.

It belongs to the uracil-DNA glycosylase (UDG) superfamily. UNG family.

It localises to the cytoplasm. The enzyme catalyses Hydrolyzes single-stranded DNA or mismatched double-stranded DNA and polynucleotides, releasing free uracil.. Functionally, excises uracil residues from the DNA which can arise as a result of misincorporation of dUMP residues by DNA polymerase or due to deamination of cytosine. The chain is Uracil-DNA glycosylase from Deinococcus deserti (strain DSM 17065 / CIP 109153 / LMG 22923 / VCD115).